Here is a 520-residue protein sequence, read N- to C-terminus: Protein-export membrane protein SecD (520 aa).

Transmembrane regions (helical) follow at residues 10 to 30 (IILL…PTLA), 364 to 384 (DSLL…FLRY), 391 to 411 (LPMI…AAGI), 417 to 437 (LSVI…LVII), 461 to 481 (FWVI…LAIL), and 483 to 503 (LGDL…GVLI).

The protein belongs to the SecD/SecF family. SecD subfamily. As to quaternary structure, part of the protein translocation apparatus. Forms a complex with SecF.

It is found in the cell membrane. Functionally, involved in protein export. This Haloquadratum walsbyi (strain DSM 16790 / HBSQ001) protein is Protein-export membrane protein SecD.